The following is a 442-amino-acid chain: Glutamyl-tRNA(Gln) amidotransferase subunit D (442 aa).

Positions 63 to 84 are disordered; it reads TQTDIGSSAGAGADTEADKTES. The Asparaginase/glutaminase domain occupies 102-429; sequence PTVSLISTGG…PDPTNAMRKS (328 aa). Active-site residues include T112, T188, D189, and K265.

This sequence belongs to the asparaginase 1 family. GatD subfamily. Heterodimer of GatD and GatE.

It catalyses the reaction L-glutamyl-tRNA(Gln) + L-glutamine + ATP + H2O = L-glutaminyl-tRNA(Gln) + L-glutamate + ADP + phosphate + H(+). In terms of biological role, allows the formation of correctly charged Gln-tRNA(Gln) through the transamidation of misacylated Glu-tRNA(Gln) in organisms which lack glutaminyl-tRNA synthetase. The reaction takes place in the presence of glutamine and ATP through an activated gamma-phospho-Glu-tRNA(Gln). The GatDE system is specific for glutamate and does not act on aspartate. This Haloquadratum walsbyi (strain DSM 16790 / HBSQ001) protein is Glutamyl-tRNA(Gln) amidotransferase subunit D.